Here is a 199-residue protein sequence, read N- to C-terminus: uncharacterized protein (199 aa).

This is an uncharacterized protein from Methanocaldococcus jannaschii (strain ATCC 43067 / DSM 2661 / JAL-1 / JCM 10045 / NBRC 100440) (Methanococcus jannaschii).